The chain runs to 137 residues: Endoribonuclease YbeY (137 aa).

Positions 105, 109, and 115 each coordinate Zn(2+).

It belongs to the endoribonuclease YbeY family. The cofactor is Zn(2+).

It localises to the cytoplasm. Functionally, single strand-specific metallo-endoribonuclease involved in late-stage 70S ribosome quality control and in maturation of the 3' terminus of the 16S rRNA. The sequence is that of Endoribonuclease YbeY from Chlorobaculum tepidum (strain ATCC 49652 / DSM 12025 / NBRC 103806 / TLS) (Chlorobium tepidum).